We begin with the raw amino-acid sequence, 252 residues long: 5-oxoprolinase subunit A (252 aa).

The protein belongs to the LamB/PxpA family. As to quaternary structure, forms a complex composed of PxpA, PxpB and PxpC.

The catalysed reaction is 5-oxo-L-proline + ATP + 2 H2O = L-glutamate + ADP + phosphate + H(+). In terms of biological role, catalyzes the cleavage of 5-oxoproline to form L-glutamate coupled to the hydrolysis of ATP to ADP and inorganic phosphate. This is 5-oxoprolinase subunit A from Mycolicibacterium gilvum (strain PYR-GCK) (Mycobacterium gilvum (strain PYR-GCK)).